The following is a 152-amino-acid chain: Transcription elongation factor Spt5 (152 aa).

Residues 94-124 form the KOW domain; that stretch reads PGDLVEVIAGPFKGQKAKVVKIDESKDEVVV.

It belongs to the archaeal Spt5 family. As to quaternary structure, heterodimer composed of Spt4 and Spt5. Interacts with RNA polymerase (RNAP) independently of nucleic acids. Forms a homodimer in solution.

Stimulates transcription elongation. This is Transcription elongation factor Spt5 from Pyrococcus furiosus (strain ATCC 43587 / DSM 3638 / JCM 8422 / Vc1).